Reading from the N-terminus, the 486-residue chain is Ribulose bisphosphate carboxylase large chain (486 aa).

A propeptide spanning residues 1–2 is cleaved from the precursor; it reads MS. Residues asparagine 123 and threonine 173 each coordinate substrate. The Proton acceptor role is filled by lysine 175. Lysine 177 provides a ligand contact to substrate. Mg(2+)-binding residues include lysine 201, aspartate 203, and glutamate 204. Position 201 is an N6-carboxylysine (lysine 201). Serine 208 carries the post-translational modification Phosphoserine. Residue histidine 294 is the Proton acceptor of the active site. The substrate site is built by arginine 295 and histidine 327. Residue threonine 330 is modified to Phosphothreonine. Residue serine 379 participates in substrate binding.

This sequence belongs to the RuBisCO large chain family. Type I subfamily. Heterohexadecamer of 8 large chains and 8 small chains; disulfide-linked. The disulfide link is formed within the large subunit homodimers. Mg(2+) is required as a cofactor. Post-translationally, the disulfide bond which can form in the large chain dimeric partners within the hexadecamer appears to be associated with oxidative stress and protein turnover.

The protein localises to the plastid. It localises to the chloroplast. The enzyme catalyses 2 (2R)-3-phosphoglycerate + 2 H(+) = D-ribulose 1,5-bisphosphate + CO2 + H2O. It catalyses the reaction D-ribulose 1,5-bisphosphate + O2 = 2-phosphoglycolate + (2R)-3-phosphoglycerate + 2 H(+). RuBisCO catalyzes two reactions: the carboxylation of D-ribulose 1,5-bisphosphate, the primary event in carbon dioxide fixation, as well as the oxidative fragmentation of the pentose substrate in the photorespiration process. Both reactions occur simultaneously and in competition at the same active site. This is Ribulose bisphosphate carboxylase large chain from Aethionema grandiflorum (Persian stone-cress).